Here is a 940-residue protein sequence, read N- to C-terminus: Lysine-specific demethylase 7A (940 aa).

The PHD-type zinc-finger motif lies at 37–88 (PVYCVCRQPYDVNRFMIECDVCKDWFHGSCVGVEEHHAVDIDLYHCPDCAAL). The interval 97–114 (RRNWHRHDYTEVDDGSKP) is linker. Residues 230–386 (FSDTKMSELV…MQLRCYEMEK (157 aa)) enclose the JmjC domain. T279 is a substrate binding site. Residues H282 and D284 each coordinate Fe cation. K299 provides a ligand contact to substrate. H354 serves as a coordination point for Fe cation. 5 disordered regions span residues 483–509 (VKSQGIPSVCPVSRPSNEASPPYHSRR), 599–670 (LYTA…PDCT), 710–729 (SQKPSRQEIPVKRECPTSTS), 818–854 (NAQDLSRSQKHIKKESSSEINQKAQSRHCVDSNSSSI), and 876–920 (SPER…MATA). S604 carries the phosphoserine modification. Polar residues predominate over residues 613–623 (TQNANMKTEQS). Positions 714-724 (SRQEIPVKREC) are enriched in basic and acidic residues.

The protein belongs to the JHDM1 histone demethylase family. JHDM1D subfamily. The cofactor is Fe(2+).

The protein resides in the nucleus. It catalyses the reaction N(6),N(6)-dimethyl-L-lysyl(9)-[histone H3] + 2 2-oxoglutarate + 2 O2 = L-lysyl(9)-[histone H3] + 2 formaldehyde + 2 succinate + 2 CO2. The catalysed reaction is N(6),N(6)-dimethyl-L-lysyl(27)-[histone H3] + 2 2-oxoglutarate + 2 O2 = L-lysyl(27)-[histone H3] + 2 formaldehyde + 2 succinate + 2 CO2. The enzyme catalyses N(6),N(6)-dimethyl-L-lysyl(36)-[histone H3] + 2-oxoglutarate + O2 = N(6)-methyl-L-lysyl(36)-[histone H3] + formaldehyde + succinate + CO2. It carries out the reaction N(6)-methyl-L-lysyl(20)-[histone H4] + 2-oxoglutarate + O2 = L-lysyl(20)-[histone H4] + formaldehyde + succinate + CO2. Histone demethylase required for brain development. Specifically demethylates dimethylated 'Lys-9', 'Lys-27' and 'Lys-36' (H3K9me2, H3K27me2, H3K36me2, respectively) of histone H3 and monomethylated histone H4 'Lys-20' residue (H4K20Me1), thereby playing a central role in histone code. Specifically binds trimethylated 'Lys-4' of histone H3 (H3K4me3), affecting histone demethylase specificity: in presence of H3K4me3, it has no demethylase activity toward H3K9me2, while it has high activity toward H3K27me2. Demethylates H3K9me2 in absence of H3K4me3. Has activity toward H4K20Me1 only when nucleosome is used as a substrate and when not histone octamer is used as substrate. The polypeptide is Lysine-specific demethylase 7A (Kdm7a) (Mus musculus (Mouse)).